A 294-amino-acid chain; its full sequence is Cytidine deaminase (294 aa).

CMP/dCMP-type deaminase domains are found at residues 48–168 (DEDA…FGPK) and 186–294 (LTGD…VLLG). 89–91 (NME) is a substrate binding site. Residue histidine 102 coordinates Zn(2+). The Proton donor role is filled by glutamate 104. Zn(2+)-binding residues include cysteine 129 and cysteine 132.

It belongs to the cytidine and deoxycytidylate deaminase family. As to quaternary structure, homodimer. Zn(2+) serves as cofactor.

It catalyses the reaction cytidine + H2O + H(+) = uridine + NH4(+). The enzyme catalyses 2'-deoxycytidine + H2O + H(+) = 2'-deoxyuridine + NH4(+). Its function is as follows. This enzyme scavenges exogenous and endogenous cytidine and 2'-deoxycytidine for UMP synthesis. This chain is Cytidine deaminase, found in Salmonella agona (strain SL483).